Reading from the N-terminus, the 354-residue chain is Serine/threonine-protein kinase-transforming protein mos (354 aa).

Positions 74–350 (VCLMHRLGSG…LLQRDLKAFR (277 aa)) constitute a Protein kinase domain. Residues 80 to 88 (LGSGGFGSV) and Lys101 contribute to the ATP site. Asp209 (proton acceptor) is an active-site residue.

It belongs to the protein kinase superfamily. Ser/Thr protein kinase family.

The catalysed reaction is L-seryl-[protein] + ATP = O-phospho-L-seryl-[protein] + ADP + H(+). The enzyme catalyses L-threonyl-[protein] + ATP = O-phospho-L-threonyl-[protein] + ADP + H(+). The polypeptide is Serine/threonine-protein kinase-transforming protein mos (V-MOS) (Moloney murine sarcoma virus (strain ts110) (MoMSV)).